A 526-amino-acid polypeptide reads, in one-letter code: Thioredoxin reductase 2, mitochondrial (526 aa).

Residues 1–36 (MAAIVAALRGSSGRFRPQTRVLTRGTRGAAGAASAA) constitute a mitochondrion transit peptide. 43 to 72 (DLLVIGGGSGGLACAKEAAQLGRKVAVADY) serves as a coordination point for FAD. Lys-81 carries the N6-succinyllysine modification. Cys-88 and Cys-93 are disulfide-bonded. 2 positions are modified to N6-succinyllysine: Lys-177 and Lys-331. Catalysis depends on His-499, which acts as the Proton acceptor. The cysteinyl-selenocysteine (Cys-Sec) cross-link spans 524-525 (CU). Sec-525 is a non-standard amino acid (selenocysteine).

This sequence belongs to the class-I pyridine nucleotide-disulfide oxidoreductase family. In terms of assembly, homodimer. Requires FAD as cofactor. In terms of tissue distribution, expressed in liver, kidney, adrenal gland and heart.

It is found in the mitochondrion. It carries out the reaction [thioredoxin]-dithiol + NADP(+) = [thioredoxin]-disulfide + NADPH + H(+). Involved in the control of reactive oxygen species levels and the regulation of mitochondrial redox homeostasis. Maintains mitochondrial thioredoxin in a reduced state. May play a role in redox-regulated cell signaling. In Rattus norvegicus (Rat), this protein is Thioredoxin reductase 2, mitochondrial (Txnrd2).